The sequence spans 52 residues: UPF0391 membrane protein ABAYE0050 (52 aa).

2 helical membrane-spanning segments follow: residues 6 to 26 and 30 to 50; these read IIFA…VAGL and FAVI…ISRG.

It belongs to the UPF0391 family.

The protein localises to the cell membrane. In Acinetobacter baumannii (strain AYE), this protein is UPF0391 membrane protein ABAYE0050.